The following is a 111-amino-acid chain: Large ribosomal subunit protein uL24 (111 aa).

The protein belongs to the universal ribosomal protein uL24 family. As to quaternary structure, part of the 50S ribosomal subunit.

One of two assembly initiator proteins, it binds directly to the 5'-end of the 23S rRNA, where it nucleates assembly of the 50S subunit. Functionally, one of the proteins that surrounds the polypeptide exit tunnel on the outside of the subunit. This chain is Large ribosomal subunit protein uL24, found in Myxococcus xanthus (strain DK1622).